The primary structure comprises 462 residues: Kinetochore protein Nuf2-B (462 aa).

Positions 143–462 (SGYKSALENV…AELNRRLSRQ (320 aa)) form a coiled coil. The disordered stretch occupies residues 236–259 (EQERMKSQIVESPEQRKSKTERMK). Positions 248-259 (PEQRKSKTERMK) are enriched in basic and acidic residues.

It belongs to the NUF2 family. Component of the NDC80 complex, which is composed of ndc80, cdca1, spbc24 and spbc25. The NDC80 complex interacts with mis12 and zwint.

The protein resides in the nucleus. It localises to the chromosome. It is found in the centromere. Its subcellular location is the kinetochore. In terms of biological role, acts as a component of the essential kinetochore-associated NDC80 complex, which is required for chromosome segregation and spindle checkpoint activity. Required for kinetochore integrity and the organization of stable microtubule binding sites in the outer plate of the kinetochore. The NDC80 complex synergistically enhances the affinity of the SKA1 complex for microtubules and may allow the NDC80 complex to track depolymerizing microtubules. The sequence is that of Kinetochore protein Nuf2-B (nuf2-b) from Xenopus laevis (African clawed frog).